The following is a 315-amino-acid chain: 4-diphosphocytidyl-2-C-methyl-D-erythritol kinase (315 aa).

Residue lysine 8 is part of the active site. Residue 93–103 (PVAAGLAGGSS) participates in ATP binding. Aspartate 135 is an active-site residue.

It belongs to the GHMP kinase family. IspE subfamily.

The catalysed reaction is 4-CDP-2-C-methyl-D-erythritol + ATP = 4-CDP-2-C-methyl-D-erythritol 2-phosphate + ADP + H(+). It functions in the pathway isoprenoid biosynthesis; isopentenyl diphosphate biosynthesis via DXP pathway; isopentenyl diphosphate from 1-deoxy-D-xylulose 5-phosphate: step 3/6. Its function is as follows. Catalyzes the phosphorylation of the position 2 hydroxy group of 4-diphosphocytidyl-2C-methyl-D-erythritol. The protein is 4-diphosphocytidyl-2-C-methyl-D-erythritol kinase of Heliobacterium modesticaldum (strain ATCC 51547 / Ice1).